The chain runs to 450 residues: Keratin, type I cytoskeletal 25 (450 aa).

Residues 1–24 (MSLRLPSGSRRAGPRPTTGSLRLS) are disordered. The tract at residues 1–78 (MSLRLPSGSR…MNEGGLLSGN (78 aa)) is head. Residues 79-114 (EKVTMQNLNDRLASYLENVRALEEANADLEQKIKGW) are coil 1A. Positions 79–394 (EKVTMQNLND…LLIGGDDGAC (316 aa)) constitute an IF rod domain. The linker 1 stretch occupies residues 115 to 136 (YEKFGPGSCRGLDHDYSRYLPI). The tract at residues 137-228 (IEDLKNQIIA…KNHKEEMQVL (92 aa)) is coil 1B. A linker 12 region spans residues 229–251 (QCAAGGNVNVEMNAAPGVDLTVL). The coil 2 stretch occupies residues 252 to 390 (LNNMRAEYEA…ETYCLLIGGD (139 aa)). The segment at 391–450 (DGACKSGGYKSKDYAAGNMGNQMKDPIRAIVVKKVLEEVDQRSKVLTTRLHSLEEKSQSN) is tail. Ser442 bears the Phosphoserine mark.

Belongs to the intermediate filament family. Heterodimer of a type I and a type II keratin. Heterodimer with type II keratin KRT5 leading to the formation of keratin intermediate filament (KIF) network. Interacts with KRT6A to form filaments. As to expression, expressed in skin and wool follicle. Expression localized to the inner root sheath of wool follicle.

It is found in the cytoplasm. Its function is as follows. Essential for the proper assembly of type I and type II keratin protein complexes and formation of keratin intermediate filaments in the inner root sheath (irs). Plays a role in the cytoskeleton organization. The polypeptide is Keratin, type I cytoskeletal 25 (Ovis aries (Sheep)).